We begin with the raw amino-acid sequence, 93 residues long: Large ribosomal subunit protein uL23cz/uL23cy (93 aa).

This sequence belongs to the universal ribosomal protein uL23 family. As to quaternary structure, part of the 50S ribosomal subunit.

Its subcellular location is the plastid. It localises to the chloroplast. Binds to 23S rRNA. In Coffea arabica (Arabian coffee), this protein is Large ribosomal subunit protein uL23cz/uL23cy (rpl23-A).